The primary structure comprises 442 residues: Glutamate--methylamine ligase (442 aa).

One can recognise a GS beta-grasp domain in the interval 13-97 (NQVKYILAQF…IACDGHTHGK (85 aa)). Residues 103–442 (TRVVLKKQLE…WEVNSYLEFF (340 aa)) enclose the GS catalytic domain.

The protein belongs to the glutamine synthetase family. Type 3 subfamily. Mg(2+) is required as a cofactor.

It carries out the reaction methylamine + L-glutamate + ATP = N(5)-methyl-L-glutamine + ADP + phosphate + H(+). Catalyzes the formation of N(5)-methyl-L-glutamine from glutamate and methylamine. The polypeptide is Glutamate--methylamine ligase (Methyloversatilis universalis (strain ATCC BAA-1314 / DSM 25237 / JCM 13912 / CCUG 52030 / FAM5)).